The sequence spans 77 residues: UPF0401 protein c0279 (77 aa).

This sequence belongs to the UPF0401 family.

This Escherichia coli O6:H1 (strain CFT073 / ATCC 700928 / UPEC) protein is UPF0401 protein c0279.